A 347-amino-acid chain; its full sequence is Ribosomal RNA small subunit methyltransferase C (347 aa).

This sequence belongs to the methyltransferase superfamily. RsmC family. Monomer.

The protein localises to the cytoplasm. It carries out the reaction guanosine(1207) in 16S rRNA + S-adenosyl-L-methionine = N(2)-methylguanosine(1207) in 16S rRNA + S-adenosyl-L-homocysteine + H(+). Specifically methylates the guanine in position 1207 of 16S rRNA in the 30S particle. The protein is Ribosomal RNA small subunit methyltransferase C of Serratia proteamaculans (strain 568).